Consider the following 490-residue polypeptide: Aspartyl/glutamyl-tRNA(Asn/Gln) amidotransferase subunit B (490 aa).

The protein belongs to the GatB/GatE family. GatB subfamily. As to quaternary structure, heterotrimer of A, B and C subunits.

The catalysed reaction is L-glutamyl-tRNA(Gln) + L-glutamine + ATP + H2O = L-glutaminyl-tRNA(Gln) + L-glutamate + ADP + phosphate + H(+). It carries out the reaction L-aspartyl-tRNA(Asn) + L-glutamine + ATP + H2O = L-asparaginyl-tRNA(Asn) + L-glutamate + ADP + phosphate + 2 H(+). Functionally, allows the formation of correctly charged Asn-tRNA(Asn) or Gln-tRNA(Gln) through the transamidation of misacylated Asp-tRNA(Asn) or Glu-tRNA(Gln) in organisms which lack either or both of asparaginyl-tRNA or glutaminyl-tRNA synthetases. The reaction takes place in the presence of glutamine and ATP through an activated phospho-Asp-tRNA(Asn) or phospho-Glu-tRNA(Gln). The chain is Aspartyl/glutamyl-tRNA(Asn/Gln) amidotransferase subunit B from Burkholderia pseudomallei (strain 1106a).